The following is a 144-amino-acid chain: Eukaryotic translation initiation factor 1A, Y-chromosomal (144 aa).

Positions 1 to 15 are enriched in basic residues; that stretch reads MPKNKGKGGKNRRRG. The interval 1-26 is disordered; the sequence is MPKNKGKGGKNRRRGKNENESEKREL. The segment covering 16-26 has biased composition (basic and acidic residues); that stretch reads KNENESEKREL. Residues 22-96 enclose the S1-like domain; the sequence is EKRELVFKED…NKADVILKYN (75 aa). Lysine 88 participates in a covalent cross-link: Glycyl lysine isopeptide (Lys-Gly) (interchain with G-Cter in ubiquitin). The segment at 114–144 is disordered; it reads KINETDTFGPGDDDEVQFDDIGDDDEDIDDI. Positions 124-144 are enriched in acidic residues; that stretch reads GDDDEVQFDDIGDDDEDIDDI.

The protein belongs to the eIF-1A family. As to quaternary structure, component of the 43S pre-initiation complex (43S PIC), which is composed of the 40S ribosomal subunit, EIF1, eIF1A (EIF1AX), eIF3 complex, EIF5 and eIF2-GTP-initiator tRNA complex (eIF2 ternary complex). Interacts with EIF5; this interaction contributes to the maintenance of EIF1 within the open 43S PIC. Interacts through its C-terminal domain (CTD) with the CTD of EIF5B; from the location of the start codon by the 43S complex until the formation of the 80S complex. Ubiquitous.

The protein resides in the cytoplasm. Functionally, component of the 43S pre-initiation complex (43S PIC), which binds to the mRNA cap-proximal region, scans mRNA 5'-untranslated region, and locates the initiation codon. This protein enhances formation of the cap-proximal complex. Together with EIF1, facilitates scanning, start codon recognition, promotion of the assembly of 48S complex at the initiation codon (43S PIC becomes 48S PIC after the start codon is reached), and dissociation of aberrant complexes. After start codon location, together with EIF5B orients the initiator methionine-tRNA in a conformation that allows 60S ribosomal subunit joining to form the 80S initiation complex. Is released after 80S initiation complex formation, just after GTP hydrolysis by EIF5B, and before release of EIF5B. Its globular part is located in the A site of the 40S ribosomal subunit. Its interaction with EIF5 during scanning contribute to the maintenance of EIF1 within the open 43S PIC. In contrast to yeast orthologs, does not bind EIF1. The protein is Eukaryotic translation initiation factor 1A, Y-chromosomal (EIF1AY) of Pan troglodytes (Chimpanzee).